Here is a 154-residue protein sequence, read N- to C-terminus: Vimentin (154 aa).

Over residues Met1–Arg13 the composition is skewed to low complexity. Residues Met1–Val31 form a disordered region. The residue at position 2 (Ser2) is an N-acetylserine. Residues Ser2–Glu95 form a head region. Residue Ser5 is modified to Phosphoserine. The residue at position 7 (Ser7) is a Phosphoserine; by PKA and PKC; alternate. The O-linked (GlcNAc) serine; alternate glycan is linked to Ser7. Residue Ser8 is modified to Phosphoserine. Residues Ser9 and Ser10 each carry the phosphoserine; by PKC modification. At Thr20 the chain carries Phosphothreonine. Phosphoserine; by PKA and PKC is present on Ser25. A Phosphoserine; by PKC modification is found at Ser26. An O-linked (GlcNAc) threonine glycan is attached at Thr33. Ser34 carries O-linked (GlcNAc) serine; alternate glycosylation. Position 34 is a phosphoserine; by PKC; alternate (Ser34). Ser39 is subject to Phosphoserine; by CaMK2, PKA, PKC and ROCK2. Ser42 is subject to Phosphoserine; by PKC. Ser49 is subject to Phosphoserine. Tyr53 carries the post-translational modification Phosphotyrosine. Residue Ser55 is modified to Phosphoserine. Ser56 is modified (phosphoserine; by CDK5 and CDK1). Tyr61 carries the post-translational modification Phosphotyrosine. Position 66 is a phosphoserine; by PKA and PKC (Ser66). Ser72 bears the Phosphoserine; by AURKB and ROCK2 mark. Ser83 carries the post-translational modification Phosphoserine; by CaMK2. Phosphoserine is present on Ser87. Positions Phe96–Leu131 are coil 1A. Positions Phe96–Leu131 form a coiled coil. The IF rod domain occupies Glu103–Met154. Lys104 is covalently cross-linked (Glycyl lysine isopeptide (Lys-Gly) (interchain with G-Cter in SUMO2)). Tyr117 is subject to Phosphotyrosine. An N6-acetyllysine; alternate mark is found at Lys120, Lys129, and Lys139. Lys120 and Lys129 each carry N6-succinyllysine; alternate. Residues Lys120, Lys129, and Lys139 each participate in a glycyl lysine isopeptide (Lys-Gly) (interchain with G-Cter in SUMO2); alternate cross-link. A linker 1 region spans residues Leu132–Glu153. Ser144 is modified (phosphoserine). Met154 is a region of interest (coil 1B).

The protein belongs to the intermediate filament family. As to quaternary structure, homomer assembled from elementary dimers. Identified in complexes that contain VIM, EZR, AHNAK, BFSP1, BFSP2, ANK2, PLEC, PRX and spectrin. Interacts with BCAS3. Interacts with LGSN. Interacts with SYNM. Interacts (via rod region) with PLEC (via CH 1 domain). Interacts with STK33. Interacts with LARP6. Interacts with RAB8B. Interacts with TOR1A; the interaction associates TOR1A with the cytoskeleton. Interacts with TOR1AIP1. Interacts with TOR1AIP1. Interacts with DIAPH1. Interacts with EPPK1; interaction is dependent of higher-order structure of intermediate filament. Interacts with the non-receptor tyrosine kinase SRMS; the interaction leads to phosphorylation of VIM. Interacts with NOD2. Interacts (via head region) with CORO1C. Interacts with HDGF. Interacts with PRKCE (via phorbol-ester/DAG-type 2 domain). Interacts with BFSP2. Interacts with PPL. Interacts with PKP1 and PKP2. Interacts with SCRIB (via PDZ domains); the interaction protects SCRIB from proteasomal degradation and facilitates SCRIB localization to intermediate filaments, the interaction is reduced by cell contact inhibition. In terms of processing, one of the most prominent phosphoproteins in various cells of mesenchymal origin. Phosphorylation is enhanced during cell division, at which time vimentin filaments are significantly reorganized. Phosphorylation by PKN1 inhibits the formation of filaments. Filament disassembly during mitosis is promoted by phosphorylation at Ser-55 as well as by nestin. Phosphorylated at Ser-56 by CDK5 during neutrophil secretion in the cytoplasm. Phosphorylated by STK33. Phosphorylated on tyrosine residues by SRMS.

It is found in the cytoplasm. Its subcellular location is the cytoskeleton. The protein resides in the nucleus matrix. It localises to the cell membrane. Its function is as follows. Vimentins are class-III intermediate filaments found in various non-epithelial cells, especially mesenchymal cells. Vimentin is attached to the nucleus, endoplasmic reticulum, and mitochondria, either laterally or terminally. Plays a role in cell directional movement, orientation, cell sheet organization and Golgi complex polarization at the cell migration front. Protects SCRIB from proteasomal degradation and facilitates its localization to intermediate filaments in a cell contact-mediated manner. Functionally, involved with LARP6 in the stabilization of type I collagen mRNAs for CO1A1 and CO1A2. The sequence is that of Vimentin (VIM) from Ovis aries (Sheep).